The sequence spans 517 residues: 2-isopropylmalate synthase (517 aa).

One can recognise a Pyruvate carboxyltransferase domain in the interval 4–266 (INFFDTTLRD…ESTIQLNEIK (263 aa)). Mn(2+) contacts are provided by Asp-13, His-201, His-203, and Asn-237. A regulatory domain region spans residues 391–517 (EFESLQVHYG…IEIEKHHAIS (127 aa)).

Belongs to the alpha-IPM synthase/homocitrate synthase family. LeuA type 1 subfamily. In terms of assembly, homodimer. It depends on Mn(2+) as a cofactor.

The protein localises to the cytoplasm. The catalysed reaction is 3-methyl-2-oxobutanoate + acetyl-CoA + H2O = (2S)-2-isopropylmalate + CoA + H(+). Its pathway is amino-acid biosynthesis; L-leucine biosynthesis; L-leucine from 3-methyl-2-oxobutanoate: step 1/4. Its function is as follows. Catalyzes the condensation of the acetyl group of acetyl-CoA with 3-methyl-2-oxobutanoate (2-ketoisovalerate) to form 3-carboxy-3-hydroxy-4-methylpentanoate (2-isopropylmalate). The protein is 2-isopropylmalate synthase of Bacillus pumilus (strain SAFR-032).